The sequence spans 434 residues: Gamma-glutamyl phosphate reductase (434 aa).

This sequence belongs to the gamma-glutamyl phosphate reductase family.

Its subcellular location is the cytoplasm. It catalyses the reaction L-glutamate 5-semialdehyde + phosphate + NADP(+) = L-glutamyl 5-phosphate + NADPH + H(+). It functions in the pathway amino-acid biosynthesis; L-proline biosynthesis; L-glutamate 5-semialdehyde from L-glutamate: step 2/2. Its function is as follows. Catalyzes the NADPH-dependent reduction of L-glutamate 5-phosphate into L-glutamate 5-semialdehyde and phosphate. The product spontaneously undergoes cyclization to form 1-pyrroline-5-carboxylate. The protein is Gamma-glutamyl phosphate reductase of Pelotomaculum thermopropionicum (strain DSM 13744 / JCM 10971 / SI).